The following is a 426-amino-acid chain: Glutamate-1-semialdehyde 2,1-aminomutase (426 aa).

Position 265 is an N6-(pyridoxal phosphate)lysine (Lys-265).

The protein belongs to the class-III pyridoxal-phosphate-dependent aminotransferase family. HemL subfamily. In terms of assembly, homodimer. Pyridoxal 5'-phosphate serves as cofactor.

It is found in the cytoplasm. The enzyme catalyses (S)-4-amino-5-oxopentanoate = 5-aminolevulinate. It participates in porphyrin-containing compound metabolism; protoporphyrin-IX biosynthesis; 5-aminolevulinate from L-glutamyl-tRNA(Glu): step 2/2. This chain is Glutamate-1-semialdehyde 2,1-aminomutase, found in Methylococcus capsulatus (strain ATCC 33009 / NCIMB 11132 / Bath).